The chain runs to 224 residues: Ribose-5-phosphate isomerase A (224 aa).

Residues 26 to 29 (TGST), 81 to 84 (DGAD), and 94 to 97 (KGGG) each bind substrate. Glu-103 (proton acceptor) is an active-site residue. Lys-121 contributes to the substrate binding site.

It belongs to the ribose 5-phosphate isomerase family. As to quaternary structure, homodimer.

It catalyses the reaction aldehydo-D-ribose 5-phosphate = D-ribulose 5-phosphate. The protein operates within carbohydrate degradation; pentose phosphate pathway; D-ribose 5-phosphate from D-ribulose 5-phosphate (non-oxidative stage): step 1/1. Catalyzes the reversible conversion of ribose-5-phosphate to ribulose 5-phosphate. The sequence is that of Ribose-5-phosphate isomerase A from Listeria monocytogenes serovar 1/2a (strain ATCC BAA-679 / EGD-e).